Reading from the N-terminus, the 124-residue chain is Ribonuclease pancreatic (124 aa).

Residues 1–21 are disordered; sequence AESSAMKFQRQHMDSDGHPDT. Lys-7 and Arg-10 together coordinate substrate. The active-site Proton acceptor is His-12. 4 disulfide bridges follow: Cys-26/Cys-84, Cys-40/Cys-95, Cys-58/Cys-110, and Cys-65/Cys-72. Residues 41–45, Lys-66, and Arg-85 each bind substrate; that span reads KPVNT. His-119 functions as the Proton donor in the catalytic mechanism.

Belongs to the pancreatic ribonuclease family. Monomer. Interacts with and forms tight 1:1 complexes with RNH1. Dimerization of two such complexes may occur. Interaction with RNH1 inhibits this protein. Pancreas.

The protein localises to the secreted. The enzyme catalyses an [RNA] containing cytidine + H2O = an [RNA]-3'-cytidine-3'-phosphate + a 5'-hydroxy-ribonucleotide-3'-[RNA].. It catalyses the reaction an [RNA] containing uridine + H2O = an [RNA]-3'-uridine-3'-phosphate + a 5'-hydroxy-ribonucleotide-3'-[RNA].. In terms of biological role, endonuclease that catalyzes the cleavage of RNA on the 3' side of pyrimidine nucleotides. Acts on single-stranded and double-stranded RNA. The polypeptide is Ribonuclease pancreatic (RNASE1) (Galea musteloides (Common yellow-toothed cavy)).